Here is a 318-residue protein sequence, read N- to C-terminus: Acetyl-coenzyme A carboxylase carboxyl transferase subunit beta (318 aa).

Positions 25 to 294 (LWSKCSECGT…AVKGELPAPA (270 aa)) constitute a CoA carboxyltransferase N-terminal domain. Cysteine 29, cysteine 32, cysteine 48, and cysteine 51 together coordinate Zn(2+). The C4-type zinc-finger motif lies at 29-51 (CSECGTMLFHRELSDNLNVCTNC). The disordered stretch occupies residues 286-318 (VKGELPAPAPLESDAETALASDTDPNGAPPSKD).

This sequence belongs to the AccD/PCCB family. Acetyl-CoA carboxylase is a heterohexamer composed of biotin carboxyl carrier protein (AccB), biotin carboxylase (AccC) and two subunits each of ACCase subunit alpha (AccA) and ACCase subunit beta (AccD). It depends on Zn(2+) as a cofactor.

It localises to the cytoplasm. The catalysed reaction is N(6)-carboxybiotinyl-L-lysyl-[protein] + acetyl-CoA = N(6)-biotinyl-L-lysyl-[protein] + malonyl-CoA. The protein operates within lipid metabolism; malonyl-CoA biosynthesis; malonyl-CoA from acetyl-CoA: step 1/1. Component of the acetyl coenzyme A carboxylase (ACC) complex. Biotin carboxylase (BC) catalyzes the carboxylation of biotin on its carrier protein (BCCP) and then the CO(2) group is transferred by the transcarboxylase to acetyl-CoA to form malonyl-CoA. This is Acetyl-coenzyme A carboxylase carboxyl transferase subunit beta from Jannaschia sp. (strain CCS1).